Here is a 57-residue protein sequence, read N- to C-terminus: uncharacterized protein (57 aa).

A helical membrane pass occupies residues 34 to 54 (AALLDAAALVVIPGLLTVAAV).

The protein localises to the membrane. This is an uncharacterized protein from Dictyostelium discoideum (Social amoeba).